We begin with the raw amino-acid sequence, 325 residues long: Phosphatidylserine decarboxylase proenzyme (325 aa).

Active-site charge relay system; for autoendoproteolytic cleavage activity residues include Asp90, His147, and Ser253. Ser253 (schiff-base intermediate with substrate; via pyruvic acid; for decarboxylase activity) is an active-site residue. Pyruvic acid (Ser); by autocatalysis is present on Ser253. A disordered region spans residues 281-325; that stretch reads MASKMSSQKAITPEQTTETPVQASNEFDDNAGETKKDTPSEGADS. Over residues 284-305 the composition is skewed to polar residues; it reads KMSSQKAITPEQTTETPVQASN.

This sequence belongs to the phosphatidylserine decarboxylase family. PSD-B subfamily. Prokaryotic type I sub-subfamily. As to quaternary structure, heterodimer of a large membrane-associated beta subunit and a small pyruvoyl-containing alpha subunit. The cofactor is pyruvate. Is synthesized initially as an inactive proenzyme. Formation of the active enzyme involves a self-maturation process in which the active site pyruvoyl group is generated from an internal serine residue via an autocatalytic post-translational modification. Two non-identical subunits are generated from the proenzyme in this reaction, and the pyruvate is formed at the N-terminus of the alpha chain, which is derived from the carboxyl end of the proenzyme. The autoendoproteolytic cleavage occurs by a canonical serine protease mechanism, in which the side chain hydroxyl group of the serine supplies its oxygen atom to form the C-terminus of the beta chain, while the remainder of the serine residue undergoes an oxidative deamination to produce ammonia and the pyruvoyl prosthetic group on the alpha chain. During this reaction, the Ser that is part of the protease active site of the proenzyme becomes the pyruvoyl prosthetic group, which constitutes an essential element of the active site of the mature decarboxylase.

It is found in the cell membrane. The enzyme catalyses a 1,2-diacyl-sn-glycero-3-phospho-L-serine + H(+) = a 1,2-diacyl-sn-glycero-3-phosphoethanolamine + CO2. The protein operates within phospholipid metabolism; phosphatidylethanolamine biosynthesis; phosphatidylethanolamine from CDP-diacylglycerol: step 2/2. Functionally, catalyzes the formation of phosphatidylethanolamine (PtdEtn) from phosphatidylserine (PtdSer). The chain is Phosphatidylserine decarboxylase proenzyme from Alteromonas mediterranea (strain DSM 17117 / CIP 110805 / LMG 28347 / Deep ecotype).